The following is a 92-amino-acid chain: Large ribosomal subunit protein bL28 (92 aa).

Belongs to the bacterial ribosomal protein bL28 family.

The sequence is that of Large ribosomal subunit protein bL28 from Borrelia garinii subsp. bavariensis (strain ATCC BAA-2496 / DSM 23469 / PBi) (Borreliella bavariensis).